A 161-amino-acid polypeptide reads, in one-letter code: 2-C-methyl-D-erythritol 2,4-cyclodiphosphate synthase (161 aa).

A divalent metal cation contacts are provided by Asp8 and His10. Residues 8–10 and 34–35 contribute to the 4-CDP-2-C-methyl-D-erythritol 2-phosphate site; these read DVH and HS. His42 is an a divalent metal cation binding site. 4-CDP-2-C-methyl-D-erythritol 2-phosphate is bound by residues 56–58, 61–65, 100–106, 132–135, and Phe139; these read DIG, FPDTD, AQSPKMA, and TTEE.

This sequence belongs to the IspF family. In terms of assembly, homotrimer. A divalent metal cation is required as a cofactor.

The catalysed reaction is 4-CDP-2-C-methyl-D-erythritol 2-phosphate = 2-C-methyl-D-erythritol 2,4-cyclic diphosphate + CMP. The protein operates within isoprenoid biosynthesis; isopentenyl diphosphate biosynthesis via DXP pathway; isopentenyl diphosphate from 1-deoxy-D-xylulose 5-phosphate: step 4/6. In terms of biological role, involved in the biosynthesis of isopentenyl diphosphate (IPP) and dimethylallyl diphosphate (DMAPP), two major building blocks of isoprenoid compounds. Catalyzes the conversion of 4-diphosphocytidyl-2-C-methyl-D-erythritol 2-phosphate (CDP-ME2P) to 2-C-methyl-D-erythritol 2,4-cyclodiphosphate (ME-CPP) with a corresponding release of cytidine 5-monophosphate (CMP). The protein is 2-C-methyl-D-erythritol 2,4-cyclodiphosphate synthase of Clostridioides difficile (strain 630) (Peptoclostridium difficile).